Here is a 269-residue protein sequence, read N- to C-terminus: Aminoglycoside N(3)-acetyltransferase III (269 aa).

The protein belongs to the antibiotic N-acetyltransferase family.

It catalyses the reaction a 2-deoxystreptamine antibiotic + acetyl-CoA = an N(3)-acetyl-2-deoxystreptamine antibiotic + CoA + H(+). Resistance to antibiotics containing the 2-deoxy-streptamine ring including gentamicin, kanamycin, tobramycin, neomycin and apramycin. The protein is Aminoglycoside N(3)-acetyltransferase III (aac3-Vb) of Serratia marcescens.